Reading from the N-terminus, the 149-residue chain is MRLHELYPFDEERKQRKRVGRGSGSGWGCTSGKGNKGQNARSGGGVRPGFEGGQMPLQRRLPKRGFKNYLFKARYEVINLGQLVGAFEGKTEITLDDIYARGLARAGAAVKVLGNGECNVAVKVEAHKFSASAVEKIQKAGGEAKALEG.

The tract at residues 14-57 (KQRKRVGRGSGSGWGCTSGKGNKGQNARSGGGVRPGFEGGQMPL) is disordered. Gly residues-rich tracts occupy residues 21-35 (RGSG…GKGN) and 42-52 (SGGGVRPGFEG).

The protein belongs to the universal ribosomal protein uL15 family. Part of the 50S ribosomal subunit.

Its function is as follows. Binds to the 23S rRNA. This Oleidesulfovibrio alaskensis (strain ATCC BAA-1058 / DSM 17464 / G20) (Desulfovibrio alaskensis) protein is Large ribosomal subunit protein uL15.